The following is a 198-amino-acid chain: Recombination protein RecR (198 aa).

The C4-type zinc finger occupies 58–73 (CSVCNNLTEKDPCDFC). Positions 81-175 (NLICVVESPK…KVTRIAHGLP (95 aa)) constitute a Toprim domain.

This sequence belongs to the RecR family.

Functionally, may play a role in DNA repair. It seems to be involved in an RecBC-independent recombinational process of DNA repair. It may act with RecF and RecO. The polypeptide is Recombination protein RecR (Halothermothrix orenii (strain H 168 / OCM 544 / DSM 9562)).